The primary structure comprises 257 residues: Imidazole glycerol phosphate synthase subunit HisF (257 aa).

Catalysis depends on residues Asp12 and Asp131.

The protein belongs to the HisA/HisF family. As to quaternary structure, heterodimer of HisH and HisF.

It localises to the cytoplasm. It carries out the reaction 5-[(5-phospho-1-deoxy-D-ribulos-1-ylimino)methylamino]-1-(5-phospho-beta-D-ribosyl)imidazole-4-carboxamide + L-glutamine = D-erythro-1-(imidazol-4-yl)glycerol 3-phosphate + 5-amino-1-(5-phospho-beta-D-ribosyl)imidazole-4-carboxamide + L-glutamate + H(+). The protein operates within amino-acid biosynthesis; L-histidine biosynthesis; L-histidine from 5-phospho-alpha-D-ribose 1-diphosphate: step 5/9. Functionally, IGPS catalyzes the conversion of PRFAR and glutamine to IGP, AICAR and glutamate. The HisF subunit catalyzes the cyclization activity that produces IGP and AICAR from PRFAR using the ammonia provided by the HisH subunit. The sequence is that of Imidazole glycerol phosphate synthase subunit HisF from Burkholderia lata (strain ATCC 17760 / DSM 23089 / LMG 22485 / NCIMB 9086 / R18194 / 383).